We begin with the raw amino-acid sequence, 155 residues long: RNA-binding protein 3 (155 aa).

In terms of domain architecture, RRM spans 6–84 (GKLFVGGLNF…RQIRVDHAGK (79 aa)). Arginine 47 bears the Omega-N-methylarginine mark. Residues 79–155 (VDHAGKSARG…GGNYRDNYDN (77 aa)) are disordered. Arginine 105 carries the asymmetric dimethylarginine; alternate modification. Dimethylated arginine; alternate is present on arginine 105. Arginine 105 is modified (omega-N-methylarginine; alternate). Gly residues predominate over residues 105 to 114 (RGGGDQGYGS). Arginine 120 and arginine 130 each carry omega-N-methylarginine. A phosphoserine mark is found at serine 135 and serine 145. Phosphotyrosine is present on tyrosine 153.

Interacts with RPL4. Associates with the 60S ribosomal subunits. In terms of processing, arg-105 is dimethylated, probably to asymmetric dimethylarginine. Post-translationally, phosphorylated. Isoform 2 is methylated. In terms of tissue distribution, widely expressed in the brain. Highly expressed in the cerebellum and olfactory bulb (at protein level). Expressed in neurons and glial cells.

It is found in the nucleus. The protein resides in the cytoplasm. The protein localises to the cell projection. Its subcellular location is the dendrite. Cold-inducible mRNA binding protein that enhances global protein synthesis at both physiological and mild hypothermic temperatures. Reduces the relative abundance of microRNAs, when overexpressed. Enhances phosphorylation of translation initiation factors and active polysome formation. The chain is RNA-binding protein 3 (Rbm3) from Rattus norvegicus (Rat).